The sequence spans 204 residues: Tat proofreading chaperone DmsD (204 aa).

It belongs to the TorD/DmsD family. DmsD subfamily.

Its function is as follows. Required for biogenesis/assembly of DMSO reductase, but not for the interaction of the DmsA signal peptide with the Tat system. May be part of a chaperone cascade complex that facilitates a folding-maturation pathway for the substrate protein. This is Tat proofreading chaperone DmsD from Salmonella paratyphi A (strain ATCC 9150 / SARB42).